The following is a 225-amino-acid chain: MSSQALDSAKIAFIEAAIEHGVLLFGNFTLKSGRQSPYFFNAGLLYSSSLLSTTAQAYAKVLSSSRIPDFDVLFGPAYKGISLAAVSAVSLYQQTGKDIGYCYNRKEKKDHGEGGTMVGAPLKGRIVIIDDVLTSGKAIREAIDILKASPEAKLVGIVQLVDRQEKGQSGSGKSTVQEVEEEFGVPVEPIIGLDDIVKYLESSGKWEKELQEVRKYRAEYGVQRS.

Lys31 serves as a coordination point for 5-phospho-alpha-D-ribose 1-diphosphate. 39–40 (FF) contributes to the orotate binding site. Residues 78–79 (YK), Arg105, Lys106, Lys109, His111, and 130–138 (DDVLTSGKA) contribute to the 5-phospho-alpha-D-ribose 1-diphosphate site. The orotate site is built by Thr134 and Arg163.

This sequence belongs to the purine/pyrimidine phosphoribosyltransferase family. PyrE subfamily. In terms of assembly, homodimer.

It catalyses the reaction orotidine 5'-phosphate + diphosphate = orotate + 5-phospho-alpha-D-ribose 1-diphosphate. It participates in pyrimidine metabolism; UMP biosynthesis via de novo pathway; UMP from orotate: step 1/2. Catalyzes the transfer of a ribosyl phosphate group from 5-phosphoribose 1-diphosphate to orotate, leading to the formation of orotidine monophosphate (OMP). The protein is Orotate phosphoribosyltransferase (URA5) of Cryptococcus neoformans var. grubii serotype A (strain H99 / ATCC 208821 / CBS 10515 / FGSC 9487) (Filobasidiella neoformans var. grubii).